Reading from the N-terminus, the 239-residue chain is Ribosomal RNA small subunit methyltransferase G (239 aa).

Residues G78, F83, 129 to 130 (AE), and R148 each bind S-adenosyl-L-methionine.

Belongs to the methyltransferase superfamily. RNA methyltransferase RsmG family.

Its subcellular location is the cytoplasm. Specifically methylates the N7 position of a guanine in 16S rRNA. This chain is Ribosomal RNA small subunit methyltransferase G, found in Clostridium botulinum (strain Loch Maree / Type A3).